Here is a 129-residue protein sequence, read N- to C-terminus: Profilin-4 (129 aa).

Belongs to the profilin family. In terms of tissue distribution, expressed in testis, in germ cells in seminiferous tubules (at protein level).

It is found in the cytoplasm. Its function is as follows. Involved in male fertility. Required for manchette development and acrosome biogenesis during spermiogenesis. Binds in vitro to phospholipids, including phosphatidylinositol 3-phosphate (PtdIns(3)P), phosphatidylinositol 4,5-bisphosphate (PtdIns(4,5)P2), phosphatidylinositol 4-phosphate (PtdIns(4)P) and phosphatidic acid (PA). Contrary to other profilin family members, does not bind to actin in vitro. The chain is Profilin-4 (Pfn4) from Mus musculus (Mouse).